The sequence spans 253 residues: Tryptophan synthase alpha chain (253 aa).

Residues E46 and D57 each act as proton acceptor in the active site.

Belongs to the TrpA family. In terms of assembly, tetramer of two alpha and two beta chains.

The catalysed reaction is (1S,2R)-1-C-(indol-3-yl)glycerol 3-phosphate + L-serine = D-glyceraldehyde 3-phosphate + L-tryptophan + H2O. Its pathway is amino-acid biosynthesis; L-tryptophan biosynthesis; L-tryptophan from chorismate: step 5/5. Functionally, the alpha subunit is responsible for the aldol cleavage of indoleglycerol phosphate to indole and glyceraldehyde 3-phosphate. This chain is Tryptophan synthase alpha chain, found in Dictyoglomus thermophilum (strain ATCC 35947 / DSM 3960 / H-6-12).